The following is a 754-amino-acid chain: Polyribonucleotide nucleotidyltransferase (754 aa).

The Mg(2+) site is built by D525 and D531. Positions P591–I650 constitute a KH domain. Residues G662–V731 form the S1 motif domain.

Belongs to the polyribonucleotide nucleotidyltransferase family. Mg(2+) is required as a cofactor.

Its subcellular location is the cytoplasm. The catalysed reaction is RNA(n+1) + phosphate = RNA(n) + a ribonucleoside 5'-diphosphate. In terms of biological role, involved in mRNA degradation. Catalyzes the phosphorolysis of single-stranded polyribonucleotides processively in the 3'- to 5'-direction. The polypeptide is Polyribonucleotide nucleotidyltransferase (Mycolicibacterium vanbaalenii (strain DSM 7251 / JCM 13017 / BCRC 16820 / KCTC 9966 / NRRL B-24157 / PYR-1) (Mycobacterium vanbaalenii)).